Here is a 361-residue protein sequence, read N- to C-terminus: MAAADEPKPKKLKVEAPQALSENVLFGMGNPLLDISAVVDKDFLDKYSLKPNDQILAEDKHKELFDELVKKFKVEYHAGGSTQNSMKVAQWLIQEPHKAATFFGCIGIDKFGEILKRKAADAHVDAHYYEQNEQPTGTCAACITGGNRSLVANLAAANCYKKEKHLDLERNWVLVEKARVYYIAGFFLTVSPESVLKVARYAAENNRVFTLNLSAPFISQFFKEALMDVMPYVDILFGNETEAATFAREQGFETKDIKEIAKKAQALPKVNSKRQRTVIFTQGRDDTIVAAENDVTAFPVLDQNQEEIIDTNGAGDAFVGGFLSQLVSDKPLTECIRAGHYAASVIIRRTGCTFPEKPDFH.

The Nuclear localization signal motif lies at 7–15 (PKPKKLKVE). Residue Asp-34 coordinates adenosine. Ser-48 is a binding site for Mg(2+). The residue at position 76 (Tyr-76) is a Phosphotyrosine. Asn-147 is a Mg(2+) binding site. Gln-305 is an adenosine binding site. The active site involves Asp-316. Residue Asp-316 is the Proton acceptor of the active site.

The protein belongs to the carbohydrate kinase PfkB family. In terms of assembly, monomer. The cofactor is Mg(2+). In terms of tissue distribution, widely expressed. Highly expressed in liver, testis, kidney and spleen (at protein level). In brain, expression in most forebrain structures and the cerebellum is higher than in the midbrain and brainstem (at protein level). As to expression, major isoform in testis and kidney. Not detected in most brain regions, except in the cerebellum, where it is expressed at a similar level to that of isoform 2 (at protein level). Major isoform in spleen and in most brain regions, except in the cerebellum, where it is expressed at a similar level to that of isoform 1 (at protein level).

The protein resides in the nucleus. It is found in the cytoplasm. The enzyme catalyses adenosine + ATP = AMP + ADP + H(+). Its pathway is purine metabolism; AMP biosynthesis via salvage pathway; AMP from adenosine: step 1/1. Activity is inhibited by 5-iodotubercidin and 5'-amino-5'-deoxyadenosine. In terms of biological role, catalyzes the phosphorylation of the purine nucleoside adenosine at the 5' position in an ATP-dependent manner. Serves as a potential regulator of concentrations of extracellular adenosine and intracellular adenine nucleotides. This Mus musculus (Mouse) protein is Adenosine kinase (Adk).